We begin with the raw amino-acid sequence, 180 residues long: Large ribosomal subunit protein mL41 (180 aa).

The transit peptide at 1 to 21 (MKLVLVSTRGVRSLNSTNFPA) directs the protein to the mitochondrion.

The protein belongs to the mitochondrion-specific ribosomal protein mL41 family. In terms of assembly, component of the mitochondrial ribosome large subunit (39S) which comprises a 16S rRNA and about 50 distinct proteins.

The protein localises to the mitochondrion. In Caenorhabditis elegans, this protein is Large ribosomal subunit protein mL41 (mrpl-41).